Here is a 428-residue protein sequence, read N- to C-terminus: Histidine--tRNA ligase (428 aa).

This sequence belongs to the class-II aminoacyl-tRNA synthetase family. In terms of assembly, homodimer.

The protein resides in the cytoplasm. It carries out the reaction tRNA(His) + L-histidine + ATP = L-histidyl-tRNA(His) + AMP + diphosphate + H(+). In Ectopseudomonas mendocina (strain ymp) (Pseudomonas mendocina), this protein is Histidine--tRNA ligase.